A 188-amino-acid polypeptide reads, in one-letter code: MAAAEKPVLSRYRDRMDKAVSALKEEFGSLRTGRASASLLDQVMVEAYGSTTPLNAVASVSVPEPRQINVSVWDRGVVVSVEKAIRASGLGLNPVVEGQNLRIPIPPLTEERRRDLQKIAGKYAEQQKIAVRNVRRDANDDLKKAEKDGAIAEDERKKMETEVQKMTDDAIKRIDEALKTKEHEIMQV.

The protein belongs to the RRF family.

The protein resides in the cytoplasm. In terms of biological role, responsible for the release of ribosomes from messenger RNA at the termination of protein biosynthesis. May increase the efficiency of translation by recycling ribosomes from one round of translation to another. The sequence is that of Ribosome-recycling factor from Caulobacter vibrioides (strain NA1000 / CB15N) (Caulobacter crescentus).